Reading from the N-terminus, the 231-residue chain is uncharacterized protein (231 aa).

Positions 3-119 (RADFCIIGLG…RTMGIREALI (117 aa)) constitute an RCK N-terminal domain. The RCK C-terminal domain maps to 134-221 (HGMETEIINL…VNQYLRYINP (88 aa)).

This is an uncharacterized protein from Mycoplasma pneumoniae (strain ATCC 29342 / M129 / Subtype 1) (Mycoplasmoides pneumoniae).